We begin with the raw amino-acid sequence, 346 residues long: Methylthioribose-1-phosphate isomerase (346 aa).

Residues 45–47 (RGA), Arg-87, and Gln-194 each bind substrate. Asp-235 (proton donor) is an active-site residue. 245-246 (NK) serves as a coordination point for substrate.

This sequence belongs to the eIF-2B alpha/beta/delta subunits family. MtnA subfamily.

The enzyme catalyses 5-(methylsulfanyl)-alpha-D-ribose 1-phosphate = 5-(methylsulfanyl)-D-ribulose 1-phosphate. Its pathway is amino-acid biosynthesis; L-methionine biosynthesis via salvage pathway; L-methionine from S-methyl-5-thio-alpha-D-ribose 1-phosphate: step 1/6. Its function is as follows. Catalyzes the interconversion of methylthioribose-1-phosphate (MTR-1-P) into methylthioribulose-1-phosphate (MTRu-1-P). This Syntrophomonas wolfei subsp. wolfei (strain DSM 2245B / Goettingen) protein is Methylthioribose-1-phosphate isomerase.